A 727-amino-acid chain; its full sequence is Procollagen-lysine,2-oxoglutarate 5-dioxygenase 1 (727 aa).

The N-terminal stretch at 1 to 18 (MRPLLLLALLGWLLLAEA) is a signal peptide. N163, N197, and N538 each carry an N-linked (GlcNAc...) asparagine glycan. One can recognise a Fe2OG dioxygenase domain in the interval 636–727 (QFDLAFVVRY…RYIAVSFVDP (92 aa)). Residues H656 and D658 each coordinate Fe cation. N686 carries an N-linked (GlcNAc...) asparagine glycan. Position 708 (H708) interacts with Fe cation. R718 is a catalytic residue.

Homodimer. Identified in a complex with P3H3 and P3H4. Requires Fe(2+) as cofactor. L-ascorbate is required as a cofactor.

The protein resides in the rough endoplasmic reticulum membrane. The enzyme catalyses L-lysyl-[collagen] + 2-oxoglutarate + O2 = (5R)-5-hydroxy-L-lysyl-[collagen] + succinate + CO2. Part of a complex composed of PLOD1, P3H3 and P3H4 that catalyzes hydroxylation of lysine residues in collagen alpha chains and is required for normal assembly and cross-linkling of collagen fibrils. Forms hydroxylysine residues in -Xaa-Lys-Gly- sequences in collagens. These hydroxylysines serve as sites of attachment for carbohydrate units and are essential for the stability of the intermolecular collagen cross-links. The chain is Procollagen-lysine,2-oxoglutarate 5-dioxygenase 1 (PLOD1) from Homo sapiens (Human).